The chain runs to 970 residues: uncharacterized protein (970 aa).

A helical transmembrane segment spans residues 11-31 (WILKIGTILGLVCLGLFGVIF). Residues 366-387 (ASNSNDNNNQNNNNNNNSSDVI) are disordered. Residues 367–387 (SNSNDNNNQNNNNNNNSSDVI) show a composition bias toward low complexity. The next 11 membrane-spanning stretches (helical) occupy residues 515-535 (FASSFIAFGIIVLIAAVLLTL), 537-557 (YKLLGLYKALALGLSVVSSLV), 558-578 (IFSAVGGVVDVFSFVGIFFVI), 614-634 (FFANLEFHITWLISALVVIYL), 645-665 (LMAISAITSYFFSYGISIVLI), 726-746 (FLFVWLILLAIGVVMLVLYLV), 762-782 (SNGIIAGIGIVSLLYLAYCLI), 789-809 (CLSYLVSFILLCSGLFAVMYL), 816-836 (IDQSTIQLITFVYLFWLFFAA), 877-897 (IESSSLVFIFIIYSGFNFGGI), and 903-923 (LVIFYLIAIVGLFDVATAFLP).

Its subcellular location is the cell membrane. This is an uncharacterized protein from Mycoplasma genitalium (strain ATCC 33530 / DSM 19775 / NCTC 10195 / G37) (Mycoplasmoides genitalium).